A 166-amino-acid polypeptide reads, in one-letter code: Fer3-like protein (166 aa).

Residues F57–L88 are disordered. Acidic residues predominate over residues G60–E80. Positions A101–M153 constitute a bHLH domain.

In terms of assembly, heterodimer with TCF3/E12. Interacts with the bHLH domain of TCF3/E12.

Its subcellular location is the nucleus. Its function is as follows. Transcription factor that binds to the E-box and functions as inhibitor of transcription. DNA binding requires dimerization with an E protein. Inhibits transcription activation by ASCL1/MASH1 by sequestering E proteins. The sequence is that of Fer3-like protein (FERD3L) from Homo sapiens (Human).